A 304-amino-acid polypeptide reads, in one-letter code: Insulin-like growth factor 1 receptor (304 aa).

Fibronectin type-III domains are found at residues 1–43 (ERTV…TMPA) and 49–142 (IPGP…VQAK). Residues 1–147 (ERTVISNLRP…YVQAKTTYEN (147 aa)) are Extracellular-facing. 2 N-linked (GlcNAc...) asparagine glycosylation sites follow: N115 and N128. Residues 148–168 (FIHLIIALPVAVLLIVGGLVI) form a helical membrane-spanning segment. Over 169–304 (MLYVFHRKRN…HMNGGRKNER (136 aa)) the chain is Cytoplasmic. S225 carries the post-translational modification Phosphoserine; by GSK3-beta. The residue at position 229 (S229) is a Phosphoserine. A disordered region spans residues 231–304 (ENKPPEPEEL…HMNGGRKNER (74 aa)). A compositionally biased stretch (acidic residues) spans 237–246 (PEELDLEPEN). The span at 247-263 (MESVPLDPSASSSSLPL) shows a compositional bias: low complexity. The segment covering 264–273 (PDRHSGHKAE) has biased composition (basic and acidic residues).

This sequence belongs to the protein kinase superfamily. Tyr protein kinase family. Insulin receptor subfamily. Tetramer of 2 alpha and 2 beta chains linked by disulfide bonds. The alpha chains contribute to the formation of the ligand-binding domain, while the beta chain carries the kinase domain. Forms a hybrid receptor with INSR, the hybrid is a tetramer consisting of 1 alpha chain and 1 beta chain of INSR and 1 alpha chain and 1 beta chain of IGF1R. Interacts with ARRB1 and ARRB2. Interacts with GRB10. Interacts with RACK1. Interacts with SOCS1, SOCS2 and SOCS3. Interacts with 14-3-3 proteins. Interacts with NMD2. Interacts with MAP3K5. Interacts with STAT3. Found in a ternary complex with IGF1 and ITGAV:ITGB3 or ITGA6:ITGB4. Interacts (nascent precursor form) with ZFAND2B. Post-translationally, autophosphorylated on tyrosine residues in response to ligand binding. Autophosphorylation occurs in trans, i.e. one subunit of the dimeric receptor phosphorylates tyrosine residues on the other subunit. Autophosphorylation occurs in a sequential manner. While every single phosphorylation increases kinase activity, all three tyrosine residues in the kinase activation loop have to be phosphorylated for optimal activity. Can be autophosphorylated at additional tyrosine residues (in vitro). May also be phosphorylated at tyrosine residues by mTORC2. Autophosphorylated is followed by phosphorylation of juxtamembrane tyrosines and C-terminal serines. Phosphorylation of Ser-225 by GSK-3beta restrains kinase activity and promotes cell surface expression, it requires a priming phosphorylation at Ser-229. Dephosphorylated by PTPN1. In terms of processing, polyubiquitinated in the activation loop through both 'Lys-48' and 'Lys-29' linkages, promoting receptor endocytosis and subsequent degradation by the proteasome. Ubiquitination is facilitated by pre-existing phosphorylation. Sumoylated with SUMO1. Post-translationally, controlled by regulated intramembrane proteolysis (RIP). Undergoes metalloprotease-dependent constitutive ectodomain shedding to produce a membrane-anchored 52 kDa C-Terminal fragment which is further processed by presenilin gamma-secretase to yield an intracellular 50 kDa fragment.

It is found in the cell membrane. The enzyme catalyses L-tyrosyl-[protein] + ATP = O-phospho-L-tyrosyl-[protein] + ADP + H(+). Its activity is regulated as follows. Activated by autophosphorylation at tyrosines in the kinase activation loop; phosphorylation at all three tyrosine residues is required for optimal kinase activity. Inhibited by MSC1609119A-1, BMS-754807, PQIP, benzimidazole pyridinone, isoquinolinedione, bis-azaindole, 3-cyanoquinoline, 2,4-bis-arylamino-1,3-pyrimidine, pyrrolopyrimidine, pyrrole-5-carboxaldehyde, picropodophyllin (PPP), tyrphostin derivatives. While most inhibitors bind to the ATP binding pocket, MSC1609119A-1 functions as allosteric inhibitor and binds close to the DFG motif and the activation loop. In terms of biological role, receptor tyrosine kinase which mediates actions of insulin-like growth factor 1 (IGF1). Binds IGF1 with high affinity and IGF2 and insulin (INS) with a lower affinity. The activated IGF1R is involved in cell growth and survival control. IGF1R is crucial for tumor transformation and survival of malignant cell. Ligand binding activates the receptor kinase, leading to receptor autophosphorylation, and tyrosines phosphorylation of multiple substrates, that function as signaling adapter proteins including, the insulin-receptor substrates (IRS1/2), Shc and 14-3-3 proteins. Phosphorylation of IRSs proteins lead to the activation of two main signaling pathways: the PI3K-AKT/PKB pathway and the Ras-MAPK pathway. The result of activating the MAPK pathway is increased cellular proliferation, whereas activating the PI3K pathway inhibits apoptosis and stimulates protein synthesis. Phosphorylated IRS1 can activate the 85 kDa regulatory subunit of PI3K (PIK3R1), leading to activation of several downstream substrates, including protein AKT/PKB. AKT phosphorylation, in turn, enhances protein synthesis through mTOR activation and triggers the antiapoptotic effects of IGFIR through phosphorylation and inactivation of BAD. In parallel to PI3K-driven signaling, recruitment of Grb2/SOS by phosphorylated IRS1 or Shc leads to recruitment of Ras and activation of the ras-MAPK pathway. In addition to these two main signaling pathways IGF1R signals also through the Janus kinase/signal transducer and activator of transcription pathway (JAK/STAT). Phosphorylation of JAK proteins can lead to phosphorylation/activation of signal transducers and activators of transcription (STAT) proteins. In particular activation of STAT3, may be essential for the transforming activity of IGF1R. The JAK/STAT pathway activates gene transcription and may be responsible for the transforming activity. JNK kinases can also be activated by the IGF1R. IGF1 exerts inhibiting activities on JNK activation via phosphorylation and inhibition of MAP3K5/ASK1, which is able to directly associate with the IGF1R. When present in a hybrid receptor with INSR, binds IGF1. The sequence is that of Insulin-like growth factor 1 receptor (IGF1R) from Sus scrofa (Pig).